We begin with the raw amino-acid sequence, 134 residues long: Small ribosomal subunit protein uS8c (134 aa).

Belongs to the universal ribosomal protein uS8 family. Part of the 30S ribosomal subunit.

It localises to the plastid. Its subcellular location is the chloroplast. Functionally, one of the primary rRNA binding proteins, it binds directly to 16S rRNA central domain where it helps coordinate assembly of the platform of the 30S subunit. The protein is Small ribosomal subunit protein uS8c (rps8) of Helianthus annuus (Common sunflower).